The primary structure comprises 104 residues: Large ribosomal subunit protein bL21 (104 aa).

It belongs to the bacterial ribosomal protein bL21 family. Part of the 50S ribosomal subunit. Contacts protein L20.

This protein binds to 23S rRNA in the presence of protein L20. The sequence is that of Large ribosomal subunit protein bL21 from Streptococcus thermophilus (strain ATCC BAA-491 / LMD-9).